The primary structure comprises 479 residues: Citrate synthase, mitochondrial (479 aa).

Residues methionine 1–tyrosine 37 constitute a mitochondrion transit peptide. Active-site residues include histidine 312, histidine 358, and aspartate 413. Serine 462 carries the post-translational modification Phosphoserine.

The protein belongs to the citrate synthase family. As to quaternary structure, monomer and homodimer. Exists as an inactive monomer when phosphorylated. Homodimerization is dependent on dephosphorylation of Ser-462 by PTC7 and is required for activity. Post-translationally, phosphorylation at Ser-462. Dephosphorylated at Ser-462 by PTC7.

The protein resides in the mitochondrion matrix. The enzyme catalyses oxaloacetate + acetyl-CoA + H2O = citrate + CoA + H(+). Its pathway is carbohydrate metabolism; tricarboxylic acid cycle; isocitrate from oxaloacetate: step 1/2. Phosphorylation at Ser-462 inhibits catalytic activity. Dephosphorylation at Ser-462 by PTC7 enhances catalytic activity. In terms of biological role, specific citrate synthase with catalytic activity only with acetyl-CoA. The protein is Citrate synthase, mitochondrial of Saccharomyces cerevisiae (strain ATCC 204508 / S288c) (Baker's yeast).